Here is a 195-residue protein sequence, read N- to C-terminus: Interferon omega-1 (195 aa).

The signal sequence occupies residues 1 to 23; it reads MAFSVSSLMALVVISSSPVSSMS. 2 cysteine pairs are disulfide-bonded: Cys24–Cys122 and Cys52–Cys162. N-linked (GlcNAc...) asparagine glycosylation occurs at Asn101.

The protein belongs to the alpha/beta interferon family.

The protein resides in the secreted. The polypeptide is Interferon omega-1 (Equus caballus (Horse)).